A 267-amino-acid chain; its full sequence is MSTSREDSVYLAKLAEQAERYEEMVENMKTVASSGQELSVEERNLLSVAYKNVIGARRASWRIVSSIEQKEESKEKSEHQVELICSYRSKIETELTKISDDILSVLDSHLIPSATTGESKVFYYKMKGDYHRYLAEFSSGDAREKATNASLEAYKTASEIATTELPPTHPIRLGLALNFSVFYYEIQNSPDKACHLAKQAFDDAIAELDTLSEESYKDSTLIMQLLRDNLTLWTSDMSESGQAEDQQQQQQHQQQQPPAAAEGEAPK.

Serine 2 carries the N-acetylserine modification. Lysine 76 is covalently cross-linked (Glycyl lysine isopeptide (Lys-Gly) (interchain with G-Cter in ubiquitin)). At serine 89 the chain carries Phosphoserine. The disordered stretch occupies residues 236 to 267; it reads DMSESGQAEDQQQQQQHQQQQPPAAAEGEAPK. Over residues 243–267 the composition is skewed to low complexity; the sequence is AEDQQQQQQHQQQQPPAAAEGEAPK.

Belongs to the 14-3-3 family. As to quaternary structure, homodimer. Interacts with NTH1 (via N-terminus when phosphorylated by PKA); the interaction is direct and activates NTH1. Interacts with FIN1.

Involved in growth regulation. This Saccharomyces cerevisiae (strain ATCC 204508 / S288c) (Baker's yeast) protein is Protein BMH1 (BMH1).